Consider the following 252-residue polypeptide: Imidazole glycerol phosphate synthase subunit HisF (252 aa).

Catalysis depends on residues Asp11 and Asp130.

The protein belongs to the HisA/HisF family. In terms of assembly, heterodimer of HisH and HisF.

The protein localises to the cytoplasm. The catalysed reaction is 5-[(5-phospho-1-deoxy-D-ribulos-1-ylimino)methylamino]-1-(5-phospho-beta-D-ribosyl)imidazole-4-carboxamide + L-glutamine = D-erythro-1-(imidazol-4-yl)glycerol 3-phosphate + 5-amino-1-(5-phospho-beta-D-ribosyl)imidazole-4-carboxamide + L-glutamate + H(+). Its pathway is amino-acid biosynthesis; L-histidine biosynthesis; L-histidine from 5-phospho-alpha-D-ribose 1-diphosphate: step 5/9. Its function is as follows. IGPS catalyzes the conversion of PRFAR and glutamine to IGP, AICAR and glutamate. The HisF subunit catalyzes the cyclization activity that produces IGP and AICAR from PRFAR using the ammonia provided by the HisH subunit. This is Imidazole glycerol phosphate synthase subunit HisF from Bacillus pumilus (strain SAFR-032).